A 154-amino-acid chain; its full sequence is 6,7-dimethyl-8-ribityllumazine synthase (154 aa).

Residues F22, 56-58 (AFE), and 80-82 (AVI) each bind 5-amino-6-(D-ribitylamino)uracil. Residue 85-86 (AT) coordinates (2S)-2-hydroxy-3-oxobutyl phosphate. Residue H88 is the Proton donor of the active site. F113 is a binding site for 5-amino-6-(D-ribitylamino)uracil. Residue R127 participates in (2S)-2-hydroxy-3-oxobutyl phosphate binding.

This sequence belongs to the DMRL synthase family.

The enzyme catalyses (2S)-2-hydroxy-3-oxobutyl phosphate + 5-amino-6-(D-ribitylamino)uracil = 6,7-dimethyl-8-(1-D-ribityl)lumazine + phosphate + 2 H2O + H(+). It functions in the pathway cofactor biosynthesis; riboflavin biosynthesis; riboflavin from 2-hydroxy-3-oxobutyl phosphate and 5-amino-6-(D-ribitylamino)uracil: step 1/2. Its function is as follows. Catalyzes the formation of 6,7-dimethyl-8-ribityllumazine by condensation of 5-amino-6-(D-ribitylamino)uracil with 3,4-dihydroxy-2-butanone 4-phosphate. This is the penultimate step in the biosynthesis of riboflavin. The protein is 6,7-dimethyl-8-ribityllumazine synthase of Clostridium botulinum (strain Okra / Type B1).